A 316-amino-acid polypeptide reads, in one-letter code: L-lactate dehydrogenase 3 (316 aa).

NAD(+) is bound by residues V16, D37, R42, and Y68. R91 contributes to the substrate binding site. NAD(+) is bound by residues S104, 121–123 (ASN), and T146. 123-126 (NPVD) lines the substrate pocket. Residue 151–154 (DSSR) coordinates substrate. Positions 156 and 171 each coordinate beta-D-fructose 1,6-bisphosphate. H178 functions as the Proton acceptor in the catalytic mechanism. Residue T233 coordinates substrate.

The protein belongs to the LDH/MDH superfamily. LDH family. As to quaternary structure, homotetramer.

Its subcellular location is the cytoplasm. The enzyme catalyses (S)-lactate + NAD(+) = pyruvate + NADH + H(+). It participates in fermentation; pyruvate fermentation to lactate; (S)-lactate from pyruvate: step 1/1. With respect to regulation, allosterically activated by fructose 1,6-bisphosphate (FBP). Functionally, catalyzes the conversion of lactate to pyruvate. The chain is L-lactate dehydrogenase 3 from Bacillus anthracis.